A 92-amino-acid chain; its full sequence is MANHKSALKRIRQSAKRTVANRIDKARMRTFAKKVLAAVEAGDVELAQQTLRDATSVISRTAQRGVIHTNQASRRIARLNSHVKKLAVAAAS.

It belongs to the bacterial ribosomal protein bS20 family.

Binds directly to 16S ribosomal RNA. This Magnetococcus marinus (strain ATCC BAA-1437 / JCM 17883 / MC-1) protein is Small ribosomal subunit protein bS20.